The primary structure comprises 445 residues: uncharacterized protein (445 aa).

The segment at 139-160 is disordered; the sequence is TESQKDLEYERKANKTKEENQQ.

This is an uncharacterized protein from Mycoplasma pneumoniae (strain ATCC 29342 / M129 / Subtype 1) (Mycoplasmoides pneumoniae).